The following is a 473-amino-acid chain: Glutamyl-tRNA reductase (473 aa).

Substrate contacts are provided by residues 49–52 (TCNR), S109, 114–116 (EHQ), and Q120. C50 functions as the Nucleophile in the catalytic mechanism. Residue 189–194 (GAGAMA) coordinates NADP(+). Residues 422–473 (VAISAPQPSTDSPARAAYQPTDEAATDAEPRRDDAEPPSAAAAQDAGRESRP) are disordered.

The protein belongs to the glutamyl-tRNA reductase family. As to quaternary structure, homodimer.

It catalyses the reaction (S)-4-amino-5-oxopentanoate + tRNA(Glu) + NADP(+) = L-glutamyl-tRNA(Glu) + NADPH + H(+). The protein operates within porphyrin-containing compound metabolism; protoporphyrin-IX biosynthesis; 5-aminolevulinate from L-glutamyl-tRNA(Glu): step 1/2. Catalyzes the NADPH-dependent reduction of glutamyl-tRNA(Glu) to glutamate 1-semialdehyde (GSA). This is Glutamyl-tRNA reductase from Acidothermus cellulolyticus (strain ATCC 43068 / DSM 8971 / 11B).